Consider the following 298-residue polypeptide: Leucine-rich repeat-containing protein 55 (298 aa).

A signal peptide spans 1 to 34; sequence MGDTWAQLPWPGPPHSALLLVFFLLAAGVMHSDA. The 31-residue stretch at 35–65 folds into the LRRNT domain; the sequence is GTSCPVLCTCRNQVVDCSNQRLFSVPPDLPM. Disulfide bonds link cysteine 38-cysteine 44 and cysteine 42-cysteine 51. 5 LRR repeats span residues 66-87, 90-111, 114-135, 138-160, and 163-186; these read DTRNLSLAHNRIAAVPPGYLTC, ELRVLDLRNNSLMELPPGLFLH, RLAHLDLSYNNLSHVPADMFRE, GLVHIDLSHNPWLRRVHPQAFQG, and HLRDLDLSYGGLAFLSLEALEGLP. In terms of domain architecture, LRRCT spans 196–251; that stretch reads NPWVCGCTMEPLLKWLRNRIQRCTADSQLAECRGPPEVEGAPLFSLTEESFKACHL. Intrachain disulfides connect cysteine 200/cysteine 227 and cysteine 202/cysteine 249. The helical transmembrane segment at 259-279 threads the bilayer; that stretch reads LFIAFVGFVVSIASVATNFLL.

Interacts with KCNMA1.

Its subcellular location is the cell membrane. Auxiliary protein of the large-conductance, voltage and calcium-activated potassium channel (BK alpha). Modulates gating properties by producing a marked shift in the BK channel's voltage dependence of activation in the hyperpolarizing direction, and in the absence of calcium. This chain is Leucine-rich repeat-containing protein 55 (Lrrc55), found in Mus musculus (Mouse).